Consider the following 483-residue polypeptide: Galactose-3-O-sulfotransferase 4 (483 aa).

Topologically, residues 1-18 are cytoplasmic; sequence MGVLSPTRTMRLWGPRSL. The helical; Signal-anchor for type II membrane protein transmembrane segment at 19–39 threads the bilayer; sequence GVALGVFMTIGFALQLLGGPF. At 40 to 483 the chain is on the lumenal side; that stretch reads QRRLPGLQLR…PLKTSRRPSP (444 aa). A disordered region spans residues 225 to 248; that stretch reads KRGNPHVSRDPNPPQLPSGAGPPA. A glycan (N-linked (GlcNAc...) asparagine) is linked at asparagine 371.

Belongs to the galactose-3-O-sulfotransferase family. It depends on Mn(2+) as a cofactor.

It is found in the golgi apparatus. The protein localises to the golgi stack membrane. The protein operates within protein modification; carbohydrate sulfation. In terms of biological role, catalyzes the transfer of sulfate to beta-1,3-linked galactose residues in O-linked glycoproteins. Good substrates include asialofetuin, Gal-beta-1,3-GalNAc and Gal-beta-1,3 (GlcNAc-beta-1,6)GalNAc. The chain is Galactose-3-O-sulfotransferase 4 (GAL3ST4) from Bos taurus (Bovine).